The chain runs to 471 residues: Ubiquitin carboxyl-terminal hydrolase calypso (471 aa).

In terms of domain architecture, UCH catalytic spans glycine 45–proline 276. Residue cysteine 131 is the Nucleophile of the active site. Histidine 213 functions as the Proton donor in the catalytic mechanism. Positions aspartate 307–leucine 326 are disordered. Residues asparagine 314–leucine 326 are compositionally biased toward polar residues. Positions asparagine 375–proline 403 constitute a ULD domain. The segment at lysine 405–lysine 471 is positively charged C-terminal tail required for binding nucleosomes. Residues alanine 412–lysine 471 form a disordered region. Residues threonine 422–alanine 447 show a composition bias toward low complexity. A compositionally biased stretch (basic residues) spans proline 457–lysine 471.

The protein belongs to the peptidase C12 family. BAP1 subfamily. Catalytic component of the polycomb repressive deubiquitinase (PR-DUB) complex, at least composed of caly/calypso, Asx and sba (MBD5/6 homolog). The PR-DUB complex associates with nucleosomes to mediate deubiquitination of histone H2AK118ub1 substrates; the association requires the positively charged C-terminal tail of caly, probably due to direct binding of DNA. Interacts (via ULD domain) with Asx (via DEUBAD domain); the interaction produces a stable heterodimer with a composite binding site for ubiquitin. Homodimerizes (via coiled-coil hinge-region between the UCH and ULD domains) to mediate assembly of 2 copies of the caly-Asx heterodimer into a bisymmetric tetramer; dimerization enhances PR-DUB association with nucleosomes.

It localises to the nucleus. The catalysed reaction is Thiol-dependent hydrolysis of ester, thioester, amide, peptide and isopeptide bonds formed by the C-terminal Gly of ubiquitin (a 76-residue protein attached to proteins as an intracellular targeting signal).. Its function is as follows. Catalytic component of the polycomb repressive deubiquitinase (PR-DUB) complex, a complex that specifically mediates deubiquitination of histone H2A monoubiquitinated at 'Lys-119' (H2AK118ub1). Mediates bisymmetric organization of the PR-DUB complex and is involved in association with nucleosomes to mediate deubiquitination. Does not deubiquitinate monoubiquitinated histone H2B. Required to maintain the transcriptionally repressive state of homeotic genes throughout development. The PR-DUB complex has weak or no activity toward 'Lys-48'- and 'Lys-63'-linked polyubiquitin chains. Polycomb group (PcG) protein. This chain is Ubiquitin carboxyl-terminal hydrolase calypso, found in Drosophila sechellia (Fruit fly).